Here is an 88-residue protein sequence, read N- to C-terminus: ATP synthase epsilon chain (88 aa).

Belongs to the ATPase epsilon chain family. F-type ATPases have 2 components, CF(1) - the catalytic core - and CF(0) - the membrane proton channel. CF(1) has five subunits: alpha(3), beta(3), gamma(1), delta(1), epsilon(1). CF(0) has three main subunits: a, b and c.

It localises to the cell inner membrane. Produces ATP from ADP in the presence of a proton gradient across the membrane. The protein is ATP synthase epsilon chain (atpC) of Chlorobium limicola.